The sequence spans 456 residues: Histidine--tRNA ligase (456 aa).

It belongs to the class-II aminoacyl-tRNA synthetase family. As to quaternary structure, homodimer.

The protein localises to the cytoplasm. The enzyme catalyses tRNA(His) + L-histidine + ATP = L-histidyl-tRNA(His) + AMP + diphosphate + H(+). The protein is Histidine--tRNA ligase of Borrelia garinii subsp. bavariensis (strain ATCC BAA-2496 / DSM 23469 / PBi) (Borreliella bavariensis).